Consider the following 150-residue polypeptide: Small ribosomal subunit protein uS15 (150 aa).

Over residues 1–10 (MPHRSRHKRG) the composition is skewed to basic residues. Positions 1–21 (MPHRSRHKRGSSGSVRPATKT) are disordered.

This sequence belongs to the universal ribosomal protein uS15 family. As to quaternary structure, part of the 30S ribosomal subunit.

The polypeptide is Small ribosomal subunit protein uS15 (Caldivirga maquilingensis (strain ATCC 700844 / DSM 13496 / JCM 10307 / IC-167)).